We begin with the raw amino-acid sequence, 504 residues long: Maturase K (504 aa).

It belongs to the intron maturase 2 family. MatK subfamily.

Its subcellular location is the plastid. It localises to the chloroplast. Functionally, usually encoded in the trnK tRNA gene intron. Probably assists in splicing its own and other chloroplast group II introns. The sequence is that of Maturase K from Fagus japonica (Japanese beech).